Here is a 109-residue protein sequence, read N- to C-terminus: Red pigment-concentrating prohormone (109 aa).

Residues 1–25 form the signal peptide; sequence MVRRSGVTLLVVALLVVTLMSSVSA. Position 26 is a pyrrolidone carboxylic acid (Q26). W33 carries the post-translational modification Tryptophan amide. Residues 34–78 form a disordered region; it reads GKRAAGASGSNGGVGEAVSGLHPSVGGAPGGVVPPGSSSPGDSCG. 2 stretches are compositionally biased toward low complexity: residues 49 to 59 and 67 to 78; these read EAVSGLHPSVG and PPGSSSPGDSCG.

The protein belongs to the AKH/HRTH/RPCH family.

It localises to the secreted. In terms of biological role, this hormone adapts the animal to light backgrounds by stimulating concentration of the pigment of its red body-chromatophores. This Callinectes sapidus (Blue crab) protein is Red pigment-concentrating prohormone.